A 518-amino-acid polypeptide reads, in one-letter code: Retinal dehydrogenase 2 (518 aa).

NAD(+) contacts are provided by residues 184-186 (IPW), 210-213 (KPAE), and 264-266 (STE). Glu286 serves as the catalytic Proton acceptor. Cys320 acts as the Nucleophile in catalysis. Residues 366–370 (KQYNK) and Glu417 each bind NAD(+).

Belongs to the aldehyde dehydrogenase family. As to quaternary structure, homotetramer.

The protein localises to the cytoplasm. It carries out the reaction retinal + NAD(+) + H2O = retinoate + NADH + 2 H(+). The catalysed reaction is all-trans-retinal + NAD(+) + H2O = all-trans-retinoate + NADH + 2 H(+). The enzyme catalyses all-trans-13,14-dihydroretinal + NAD(+) + H2O = all-trans-13,14-dihydroretinoate + NADH + 2 H(+). Its pathway is cofactor metabolism; retinol metabolism. In terms of biological role, catalyzes the NAD-dependent oxidation of aldehyde substrates, such as all-trans-retinal and all-trans-13,14-dihydroretinal, to their corresponding carboxylic acids, all-trans-retinoate and all-trans-13,14-dihydroretinoate, respectively. Retinoate signaling is critical for the transcriptional control of many genes, for instance it is crucial for initiation of meiosis in both male and female. Recognizes retinal as substrate, both in its free form and when bound to cellular retinol-binding protein. Lacks activity with benzaldehyde, acetaldehyde and octanal. Displays complete lack of activity with citral. In Gallus gallus (Chicken), this protein is Retinal dehydrogenase 2 (ALDH1A2).